A 299-amino-acid chain; its full sequence is Aspartate carbamoyltransferase catalytic subunit (299 aa).

Positions 54 and 55 each coordinate carbamoyl phosphate. An L-aspartate-binding site is contributed by Lys-83. Residues Arg-104, His-132, and Gln-135 each coordinate carbamoyl phosphate. L-aspartate contacts are provided by Arg-165 and Arg-222. 2 residues coordinate carbamoyl phosphate: Leu-261 and Pro-262.

It belongs to the aspartate/ornithine carbamoyltransferase superfamily. ATCase family. In terms of assembly, heterooligomer of catalytic and regulatory chains.

It catalyses the reaction carbamoyl phosphate + L-aspartate = N-carbamoyl-L-aspartate + phosphate + H(+). It functions in the pathway pyrimidine metabolism; UMP biosynthesis via de novo pathway; (S)-dihydroorotate from bicarbonate: step 2/3. Catalyzes the condensation of carbamoyl phosphate and aspartate to form carbamoyl aspartate and inorganic phosphate, the committed step in the de novo pyrimidine nucleotide biosynthesis pathway. The sequence is that of Aspartate carbamoyltransferase catalytic subunit from Archaeoglobus fulgidus (strain ATCC 49558 / DSM 4304 / JCM 9628 / NBRC 100126 / VC-16).